Consider the following 88-residue polypeptide: Small ribosomal subunit protein uS15 (88 aa).

The segment covering M1 to A12 has biased composition (polar residues). The disordered stretch occupies residues M1–S23.

The protein belongs to the universal ribosomal protein uS15 family. In terms of assembly, part of the 30S ribosomal subunit. Forms a bridge to the 50S subunit in the 70S ribosome, contacting the 23S rRNA.

Functionally, one of the primary rRNA binding proteins, it binds directly to 16S rRNA where it helps nucleate assembly of the platform of the 30S subunit by binding and bridging several RNA helices of the 16S rRNA. Its function is as follows. Forms an intersubunit bridge (bridge B4) with the 23S rRNA of the 50S subunit in the ribosome. The protein is Small ribosomal subunit protein uS15 of Psychrobacter sp. (strain PRwf-1).